The chain runs to 212 residues: Phosphoenolpyruvate guanylyltransferase (212 aa).

Residues Thr139, Gly155, and Ser158 each coordinate phosphoenolpyruvate.

The protein belongs to the CofC family.

The enzyme catalyses phosphoenolpyruvate + GTP + H(+) = enolpyruvoyl-2-diphospho-5'-guanosine + diphosphate. It functions in the pathway cofactor biosynthesis; coenzyme F420 biosynthesis. Functionally, guanylyltransferase that catalyzes the activation of phosphoenolpyruvate (PEP) as enolpyruvoyl-2-diphospho-5'-guanosine, via the condensation of PEP with GTP. It is involved in the biosynthesis of coenzyme F420, a hydride carrier cofactor. The protein is Phosphoenolpyruvate guanylyltransferase of Streptomyces coelicolor (strain ATCC BAA-471 / A3(2) / M145).